Here is a 440-residue protein sequence, read N- to C-terminus: MESQQLSQHSHISHGSACASVTSKEVHTNQDPLDVSASKIQEYDKASTKANSQQTTTPASSAVPENPHHASPQPASVPPPQNGPYPQQCMMTQNQANPSGWSFYGHPSMIPYTPYQMSPMYFPPGPQSQFPQYPSSVGTPLSTPSPESGNTFTDSSSADSDMTSTKKYVRPPPMLTSPNDFPNWVKTYIKFLQNSNLGGIIPTVNGKPVRQITDDELTFLYNTFQIFAPSQFLPTWVKDILSVDYTDIMKILSKSIEKMQSDTQEANDIVTLANLQYNGSTPADAFETKVTNIIDRLNNNGIHINNKVACQLIMRGLSGEYKFLRYTRHRHLNMTVAELFLDIHAIYEEQQGSRNSKPNYRRNPSDEKNDSRSYTNTTKPKVIARNPQKTNNSKSKTARAHNVSTSNNSPSTDNDSISKSTTEPIQLNNKHDLHLRPGTY.

A compositionally biased stretch (low complexity) spans 1–16 (MESQQLSQHSHISHGS). Disordered stretches follow at residues 1–93 (MESQ…MMTQ), 126–173 (PQSQ…RPPP), and 352–440 (GSRN…PGTY). Polar residues-rich tracts occupy residues 48-60 (TKAN…TPAS) and 127-152 (QSQF…GNTF). Over residues 153–165 (TDSSSADSDMTST) the composition is skewed to low complexity. The segment at 299-401 (NNGIHINNKV…NSKSKTARAH (103 aa)) is RNA-binding. Over residues 402-418 (NVSTSNNSPSTDNDSIS) the composition is skewed to low complexity. Serine 416 carries the phosphoserine modification. Positions 419-428 (KSTTEPIQLN) are enriched in polar residues. The span at 429 to 440 (NKHDLHLRPGTY) shows a compositional bias: basic and acidic residues.

Homotrimer.

Its subcellular location is the cytoplasm. Functionally, capsid protein (CA) is the structural component of the virus-like particle (VLP), forming the shell that encapsulates the retrotransposons dimeric RNA genome. The particles are assembled from trimer-clustered units and there are holes in the capsid shells that allow for the diffusion of macromolecules. CA also has nucleocapsid-like chaperone activity, promoting primer tRNA(i)-Met annealing to the multipartite primer-binding site (PBS), dimerization of Ty1 RNA and initiation of reverse transcription. This is Transposon Ty1-GR2 Gag polyprotein (TY1A-GR2) from Saccharomyces cerevisiae (strain ATCC 204508 / S288c) (Baker's yeast).